The following is a 793-amino-acid chain: Acetyl-CoA decarbonylase/synthase complex subunit alpha (793 aa).

The [4Fe-4S] cluster site is built by Cys55, Cys58, Cys63, and Cys73. A CO-binding site is contributed by His96. [Ni-4Fe-4S] cluster is bound by residues His229, Cys257, and Cys309. 2 4Fe-4S ferredoxin-type domains span residues 393 to 422 and 432 to 461; these read EQQFKDTLATCTECNQCAFVCPPHIRISEM and EPFSSTYEVCVGCQRCEQTCPQEIPILKLY. The [4Fe-4S] cluster site is built by Cys403, Cys406, Cys409, Cys413, Cys441, Cys444, Cys447, and Cys451. The [Ni-4Fe-4S] cluster site is built by Cys509, Cys538, and Cys573.

This sequence belongs to the Ni-containing carbon monoxide dehydrogenase family. Heterotetramer of two alpha and two epsilon subunits. The ACDS complex is made up of alpha, epsilon, beta, gamma and delta subunits with a probable stoichiometry of (alpha(2)epsilon(2))(4)-beta(8)-(gamma(1)delta(1))(8). The cofactor is [4Fe-4S] cluster. [Ni-4Fe-4S] cluster serves as cofactor.

The enzyme catalyses CO + 2 oxidized [2Fe-2S]-[ferredoxin] + H2O = 2 reduced [2Fe-2S]-[ferredoxin] + CO2 + 2 H(+). Its function is as follows. Part of the ACDS complex that catalyzes the reversible cleavage of acetyl-CoA, allowing autotrophic growth from CO(2). The alpha-epsilon subcomponent functions as a carbon monoxide dehydrogenase. The protein is Acetyl-CoA decarbonylase/synthase complex subunit alpha of Methanothrix soehngenii (Methanosaeta concilii).